The primary structure comprises 186 residues: Elongation factor P (186 aa).

Belongs to the elongation factor P family.

The protein localises to the cytoplasm. It participates in protein biosynthesis; polypeptide chain elongation. Involved in peptide bond synthesis. Stimulates efficient translation and peptide-bond synthesis on native or reconstituted 70S ribosomes in vitro. Probably functions indirectly by altering the affinity of the ribosome for aminoacyl-tRNA, thus increasing their reactivity as acceptors for peptidyl transferase. This chain is Elongation factor P, found in Shewanella loihica (strain ATCC BAA-1088 / PV-4).